Consider the following 506-residue polypeptide: Phase 2 flagellin (506 aa).

Belongs to the bacterial flagellin family.

It localises to the secreted. It is found in the bacterial flagellum. Functionally, flagellin is the subunit protein which polymerizes to form the filaments of bacterial flagella. This Salmonella typhimurium (strain LT2 / SGSC1412 / ATCC 700720) protein is Phase 2 flagellin (fljB).